We begin with the raw amino-acid sequence, 459 residues long: U1 small nuclear ribonucleoprotein 70 kDa (459 aa).

The RRM domain occupies 99-178 (KTIFVSRISY…RRIVVDIERG (80 aa)). A disordered region spans residues 185–459 (KPRKFGGGLG…YSMISNENGF (275 aa)). Basic and acidic residues predominate over residues 211–241 (EMSESREKEKEREKEKEKEKERMEKMKKRDG). A compositionally biased stretch (low complexity) spans 242 to 254 (GLSSNGNRSNGIS). Residues 263-408 (DRGDRGDRDR…IDERRRDQRD (146 aa)) are compositionally biased toward basic and acidic residues. The span at 426-440 (QHHHHQQNHQSHHNQ) shows a compositional bias: basic residues.

The protein resides in the nucleus. Functionally, mediates the splicing of pre-mRNA by binding to the stem loop I region of U1-snRNA. This chain is U1 small nuclear ribonucleoprotein 70 kDa (snrnp70), found in Dictyostelium discoideum (Social amoeba).